The sequence spans 77 residues: Acyl carrier protein (77 aa).

The 76-residue stretch at 1 to 76 (MATFDDVKAV…DVVNYIDNLK (76 aa)) folds into the Carrier domain. An O-(pantetheine 4'-phosphoryl)serine modification is found at Ser36.

The protein belongs to the acyl carrier protein (ACP) family. Post-translationally, 4'-phosphopantetheine is transferred from CoA to a specific serine of apo-ACP by AcpS. This modification is essential for activity because fatty acids are bound in thioester linkage to the sulfhydryl of the prosthetic group.

It localises to the cytoplasm. It participates in lipid metabolism; fatty acid biosynthesis. Its function is as follows. Carrier of the growing fatty acid chain in fatty acid biosynthesis. This Campylobacter jejuni subsp. jejuni serotype O:6 (strain 81116 / NCTC 11828) protein is Acyl carrier protein.